The chain runs to 380 residues: 1-deoxy-D-xylulose 5-phosphate reductoisomerase (380 aa).

Thr10, Gly11, Ser12, Ile13, Gly35, Arg36, Asn37, and Asn121 together coordinate NADPH. Lys122 is a 1-deoxy-D-xylulose 5-phosphate binding site. Glu123 provides a ligand contact to NADPH. Asp147 lines the Mn(2+) pocket. Positions 148, 149, 173, and 196 each coordinate 1-deoxy-D-xylulose 5-phosphate. Glu149 provides a ligand contact to Mn(2+). Gly202 contributes to the NADPH binding site. 1-deoxy-D-xylulose 5-phosphate-binding residues include Ser209, Asn214, Lys215, and Glu218. Glu218 serves as a coordination point for Mn(2+).

This sequence belongs to the DXR family. Mg(2+) serves as cofactor. Mn(2+) is required as a cofactor.

It catalyses the reaction 2-C-methyl-D-erythritol 4-phosphate + NADP(+) = 1-deoxy-D-xylulose 5-phosphate + NADPH + H(+). It participates in isoprenoid biosynthesis; isopentenyl diphosphate biosynthesis via DXP pathway; isopentenyl diphosphate from 1-deoxy-D-xylulose 5-phosphate: step 1/6. Its function is as follows. Catalyzes the NADPH-dependent rearrangement and reduction of 1-deoxy-D-xylulose-5-phosphate (DXP) to 2-C-methyl-D-erythritol 4-phosphate (MEP). This Agathobacter rectalis (strain ATCC 33656 / DSM 3377 / JCM 17463 / KCTC 5835 / VPI 0990) (Eubacterium rectale) protein is 1-deoxy-D-xylulose 5-phosphate reductoisomerase.